The chain runs to 395 residues: Glutamate N-acetyltransferase (395 aa).

6 residues coordinate substrate: Thr146, Lys169, Thr180, Glu263, Asn390, and Thr395. Thr180 serves as the catalytic Nucleophile.

It belongs to the ArgJ family. In terms of assembly, heterotetramer of two alpha and two beta chains.

It localises to the cytoplasm. The enzyme catalyses N(2)-acetyl-L-ornithine + L-glutamate = N-acetyl-L-glutamate + L-ornithine. It participates in amino-acid biosynthesis; L-arginine biosynthesis; L-ornithine and N-acetyl-L-glutamate from L-glutamate and N(2)-acetyl-L-ornithine (cyclic): step 1/1. In terms of biological role, catalyzes the transfer of the acetyl group from N(2)-acetylornithine to glutamate, forming N-acetylglutamate and L-ornithine. In Methanosarcina mazei (strain ATCC BAA-159 / DSM 3647 / Goe1 / Go1 / JCM 11833 / OCM 88) (Methanosarcina frisia), this protein is Glutamate N-acetyltransferase.